Reading from the N-terminus, the 155-residue chain is Phospholipase A2 A2-actitoxin-Ucs2a (155 aa).

Residues 1–19 (MKNNIILVILLGISVFVDC) form the signal peptide. A propeptide spanning residues 20–42 (LPLNDQEEDKSLNAQESEVSAVQ) is cleaved from the precursor. Intrachain disulfides connect C55-C118, C71-C87, C86-C143, C93-C136, C100-C129, and C122-C134. Ca(2+)-binding residues include G72 and G74. Residue H90 is part of the active site. Ca(2+) is bound at residue D91. The active site involves D137.

This sequence belongs to the phospholipase A2 family. Ca(2+) is required as a cofactor.

Its subcellular location is the secreted. It is found in the nematocyst. The enzyme catalyses a 1,2-diacyl-sn-glycero-3-phosphocholine + H2O = a 1-acyl-sn-glycero-3-phosphocholine + a fatty acid + H(+). PLA2 catalyzes the calcium-dependent hydrolysis of the 2-acyl groups in 3-sn-phosphoglycerides. In Urticina crassicornis (Mottled anemone), this protein is Phospholipase A2 A2-actitoxin-Ucs2a.